The following is a 237-amino-acid chain: Probable transcriptional regulatory protein NIS_0560 (237 aa).

It belongs to the TACO1 family.

The protein localises to the cytoplasm. The chain is Probable transcriptional regulatory protein NIS_0560 from Nitratiruptor sp. (strain SB155-2).